Consider the following 423-residue polypeptide: MDSRVALVRKYIAPSVIKSDSIQLHGLVKAPLFKALNSRYKLGSLQIVQDVDWNAKTTPSDSPEPLAATLNSNRSLPMTKFPKQEILEQVKLDTKVGKWRKFMTGWFRIGLYLLKSYKTGIQNTLKVFWDTRNEEQKFSIKNGALANLVREIEMHEINTRLSSSSLPTSSSAKAPLRPLSINRKTLVELIRRDQIWKLPVFFTLVFIFEEVSVLIFTFFPRVCPYNCLTPGGYKKLSNSYIKGTTSTQGNYGLGPLEFTKQGTIKYEPPYAVPIENLYNFLTSFPQSMISNWKLYIYKKLKLQKLLCNEIEKIYQYLFIDDWLLLQSILNTDVEKTKIALSDRELVNCILERKLYHMGDDLNEMVNDTLGKEILLKRLFLYWTLRYNDTISLNGKHTFSEKWGVNNISLLKYNSELVATKDIQ.

Residues 199 to 219 (PVFFTLVFIFEEVSVLIFTFF) traverse the membrane as a helical segment.

In terms of assembly, interacts with COX18. This interaction may be essential for its insertion into mitochondrial inner membrane.

It localises to the mitochondrion inner membrane. In terms of biological role, probably involved in mitochondrial export. Confers resistance to the anti-pneumocystis carinii drug pentamidine. May act by the removal of pentamidine, or its damage targets, from the matrix by an active-transport mechanism. This Saccharomyces cerevisiae (strain ATCC 204508 / S288c) (Baker's yeast) protein is Pentamidine resistance factor, mitochondrial (PNT1).